A 131-amino-acid chain; its full sequence is uncharacterized protein (131 aa).

The segment at 13–32 is disordered; sequence TYSPLPEPPPTPALGGQRGP.

This is an uncharacterized protein from Homo sapiens (Human).